The following is a 224-amino-acid chain: Phosphoribosylformylglycinamidine synthase subunit PurQ (224 aa).

The Glutamine amidotransferase type-1 domain maps to 4–224 (RIGIITFPGT…YSVLDGVLAG (221 aa)). C87 (nucleophile) is an active-site residue. Active-site residues include H195 and E197.

In terms of assembly, part of the FGAM synthase complex composed of 1 PurL, 1 PurQ and 2 PurS subunits.

It localises to the cytoplasm. The enzyme catalyses N(2)-formyl-N(1)-(5-phospho-beta-D-ribosyl)glycinamide + L-glutamine + ATP + H2O = 2-formamido-N(1)-(5-O-phospho-beta-D-ribosyl)acetamidine + L-glutamate + ADP + phosphate + H(+). The catalysed reaction is L-glutamine + H2O = L-glutamate + NH4(+). Its pathway is purine metabolism; IMP biosynthesis via de novo pathway; 5-amino-1-(5-phospho-D-ribosyl)imidazole from N(2)-formyl-N(1)-(5-phospho-D-ribosyl)glycinamide: step 1/2. Functionally, part of the phosphoribosylformylglycinamidine synthase complex involved in the purines biosynthetic pathway. Catalyzes the ATP-dependent conversion of formylglycinamide ribonucleotide (FGAR) and glutamine to yield formylglycinamidine ribonucleotide (FGAM) and glutamate. The FGAM synthase complex is composed of three subunits. PurQ produces an ammonia molecule by converting glutamine to glutamate. PurL transfers the ammonia molecule to FGAR to form FGAM in an ATP-dependent manner. PurS interacts with PurQ and PurL and is thought to assist in the transfer of the ammonia molecule from PurQ to PurL. This is Phosphoribosylformylglycinamidine synthase subunit PurQ from Mycolicibacterium paratuberculosis (strain ATCC BAA-968 / K-10) (Mycobacterium paratuberculosis).